Reading from the N-terminus, the 643-residue chain is 3D-(3,5/4)-trihydroxycyclohexane-1,2-dione hydrolase (643 aa).

Glu-65 is a binding site for thiamine diphosphate. The interval 441–521 is thiamine pyrophosphate binding; it reads SLPGDLQRMW…VNVLLFDNCG (81 aa). The Mg(2+) site is built by Asp-492 and Asn-519.

Belongs to the TPP enzyme family. Mg(2+) is required as a cofactor. The cofactor is thiamine diphosphate.

It carries out the reaction 3D-3,5/4-trihydroxycyclohexane-1,2-dione + H2O = 5-deoxy-D-glucuronate + H(+). The protein operates within polyol metabolism; myo-inositol degradation into acetyl-CoA; acetyl-CoA from myo-inositol: step 3/7. In terms of biological role, involved in the cleavage of the C1-C2 bond of 3D-(3,5/4)-trihydroxycyclohexane-1,2-dione (THcHDO) to yield 5-deoxy-glucuronate (5DG). This is 3D-(3,5/4)-trihydroxycyclohexane-1,2-dione hydrolase from Clostridium botulinum (strain Alaska E43 / Type E3).